A 394-amino-acid polypeptide reads, in one-letter code: F-box protein At2g17830 (394 aa).

In terms of domain architecture, F-box spans 1-47 (MAIMSDLPRDLLAEILSRVPLASLRSVRFTCKKWNDLSKDRSFLKKQ).

This chain is F-box protein At2g17830, found in Arabidopsis thaliana (Mouse-ear cress).